Reading from the N-terminus, the 292-residue chain is Syntenin-2 (292 aa).

PDZ domains follow at residues 108 to 187 (EIHL…IRDR) and 192 to 267 (TVTM…IPTV).

In terms of assembly, monomer and homodimer. Interacts with SDCBP. Interacts with TM4SF1.

The protein resides in the cytoplasm. Its subcellular location is the nucleus. It is found in the nucleolus. The protein localises to the nucleoplasm. It localises to the cell membrane. The protein resides in the nucleus speckle. Binds phosphatidylinositol 4,5-bisphosphate (PIP2). May play a role in the organization of nuclear PIP2, cell division and cell survival. The chain is Syntenin-2 (Sdcbp2) from Mus musculus (Mouse).